A 333-amino-acid polypeptide reads, in one-letter code: Foldase protein PrsA (333 aa).

Residues 1 to 22 (MKKSTKLLAGIVTLASAMTLAA) form the signal peptide. Cys-23 carries N-palmitoyl cysteine lipidation. Cys-23 carries S-diacylglycerol cysteine lipidation. The region spanning 145–240 (TPEMTTQVIT…NKFYIVKVTK (96 aa)) is the PpiC domain. The disordered stretch occupies residues 301-333 (DKKASKANTSKSDQKTSSDSSKDSQSSKSKSEK). Positions 312–322 (SDQKTSSDSSK) are enriched in basic and acidic residues. Low complexity predominate over residues 323 to 333 (DSQSSKSKSEK).

Belongs to the PrsA family.

It localises to the cell membrane. It carries out the reaction [protein]-peptidylproline (omega=180) = [protein]-peptidylproline (omega=0). In terms of biological role, plays a major role in protein secretion by helping the post-translocational extracellular folding of several secreted proteins. The chain is Foldase protein PrsA from Streptococcus equi subsp. zooepidemicus (strain MGCS10565).